The chain runs to 390 residues: Formate-dependent phosphoribosylglycinamide formyltransferase (390 aa).

N(1)-(5-phospho-beta-D-ribosyl)glycinamide contacts are provided by residues 14–15 and E74; that span reads EL. Residues R106, K147, 152–157, 187–190, and E195 contribute to the ATP site; these read SSGKGQ and EQFI. An ATP-grasp domain is found at 111–304; that stretch reads DLAAQELGIT…EFDLHARAIM (194 aa). Residues E263 and E275 each contribute to the Mg(2+) site. N(1)-(5-phospho-beta-D-ribosyl)glycinamide contacts are provided by residues D282, K351, and 358 to 359; that span reads RR.

It belongs to the PurK/PurT family. Homodimer.

The enzyme catalyses N(1)-(5-phospho-beta-D-ribosyl)glycinamide + formate + ATP = N(2)-formyl-N(1)-(5-phospho-beta-D-ribosyl)glycinamide + ADP + phosphate + H(+). It functions in the pathway purine metabolism; IMP biosynthesis via de novo pathway; N(2)-formyl-N(1)-(5-phospho-D-ribosyl)glycinamide from N(1)-(5-phospho-D-ribosyl)glycinamide (formate route): step 1/1. In terms of biological role, involved in the de novo purine biosynthesis. Catalyzes the transfer of formate to 5-phospho-ribosyl-glycinamide (GAR), producing 5-phospho-ribosyl-N-formylglycinamide (FGAR). Formate is provided by PurU via hydrolysis of 10-formyl-tetrahydrofolate. The chain is Formate-dependent phosphoribosylglycinamide formyltransferase from Erythrobacter litoralis (strain HTCC2594).